The following is a 95-amino-acid chain: Aspartyl/glutamyl-tRNA(Asn/Gln) amidotransferase subunit C (95 aa).

Residues 55–67 (ALERRNVTREDQV) are compositionally biased toward basic and acidic residues. Positions 55 to 83 (ALERRNVTREDQVHNSLTNDKALENAPET) are disordered.

The protein belongs to the GatC family. Heterotrimer of A, B and C subunits.

The enzyme catalyses L-glutamyl-tRNA(Gln) + L-glutamine + ATP + H2O = L-glutaminyl-tRNA(Gln) + L-glutamate + ADP + phosphate + H(+). It carries out the reaction L-aspartyl-tRNA(Asn) + L-glutamine + ATP + H2O = L-asparaginyl-tRNA(Asn) + L-glutamate + ADP + phosphate + 2 H(+). Functionally, allows the formation of correctly charged Asn-tRNA(Asn) or Gln-tRNA(Gln) through the transamidation of misacylated Asp-tRNA(Asn) or Glu-tRNA(Gln) in organisms which lack either or both of asparaginyl-tRNA or glutaminyl-tRNA synthetases. The reaction takes place in the presence of glutamine and ATP through an activated phospho-Asp-tRNA(Asn) or phospho-Glu-tRNA(Gln). This chain is Aspartyl/glutamyl-tRNA(Asn/Gln) amidotransferase subunit C, found in Natranaerobius thermophilus (strain ATCC BAA-1301 / DSM 18059 / JW/NM-WN-LF).